The sequence spans 217 residues: Small ribosomal subunit protein uS3 (217 aa).

The KH type-2 domain maps to 38 to 106 (IRKFIDNELK…KVHINVIEIK (69 aa)).

The protein belongs to the universal ribosomal protein uS3 family. In terms of assembly, part of the 30S ribosomal subunit. Forms a tight complex with proteins S10 and S14.

Functionally, binds the lower part of the 30S subunit head. Binds mRNA in the 70S ribosome, positioning it for translation. The sequence is that of Small ribosomal subunit protein uS3 from Staphylococcus epidermidis (strain ATCC 35984 / DSM 28319 / BCRC 17069 / CCUG 31568 / BM 3577 / RP62A).